The following is an 828-amino-acid chain: Potassium channel SKOR (828 aa).

The Cytoplasmic segment spans residues 1 to 86; the sequence is MGGSSGGGVS…PDNRWYKAWT (86 aa). Residues 87–107 traverse the membrane as a helical segment; it reads MFILIWALYSSFFTPLEFGFF. The Extracellular portion of the chain corresponds to 108 to 114; the sequence is RGLPENL. A helical membrane pass occupies residues 115 to 135; sequence FILDIAGQIAFLVDIVLTFFV. Residues 136 to 158 lie on the Cytoplasmic side of the membrane; sequence AYRDSRTYRMIYKRSSIALRYLK. Residues 159–179 traverse the membrane as a helical segment; that stretch reads STFIIDLLACMPWDIIYKAAG. Residues 180–185 are Extracellular-facing; it reads EKEEVR. A helical; Voltage-sensor membrane pass occupies residues 186–206; that stretch reads YLLLIRLYRVHRVILFFHKME. Residues 207–220 lie on the Cytoplasmic side of the membrane; the sequence is KDIRINYLFTRIVK. Residues 221-241 form a helical membrane-spanning segment; it reads LIFVELYCTHTAACIFYYLAT. The Extracellular segment spans residues 242-276; that stretch reads TLPASQEGYTWIGSLKLGDYSYSKFREIDLWTRYT. The pore-forming intramembrane region spans 277–296; that stretch reads TSMYFAVVTMATVGYGDIHA. Residues 297 to 300 lie on the Extracellular side of the membrane; it reads VNMR. Residues 301-321 form a helical membrane-spanning segment; it reads EMIFAMVYISFDMILGAYLIG. The Cytoplasmic segment spans residues 322-828; the sequence is NMTALIVKGS…GQKLYLAVET (507 aa). 403–523 serves as a coordination point for a nucleoside 3',5'-cyclic phosphate; it reads LFRGCSSEFI…RRILNNLLEG (121 aa). 6 ANK repeats span residues 545 to 576, 580 to 609, 613 to 642, 644 to 673, 677 to 706, and 710 to 740; these read EAEL…DPNK, DGRS…DVNI, LGST…TLNI, NAGT…DPNS, DHRT…NVLA, and WGNT…QISS. One can recognise a KHA domain in the interval 756-828; sequence KCTVYFSHPG…GQKLYLAVET (73 aa).

The protein belongs to the potassium channel family. Plant (TC 1.A.1.4) subfamily. In terms of assembly, the potassium channel is probably composed of a homo- or heterotetrameric complex of pore-forming subunits. Expressed in root pericycle and xylem parenchyma, and in flower at a lower level.

The protein resides in the membrane. In terms of biological role, highly selective outward-rectifying potassium channel. Involved in potassium release into the xylem sap toward the shoots. Assuming opened or closed conformations in response to the voltage difference across the membrane, the channel is activated by depolarization. The voltage-dependence of the channel is abolished by internal or external acidification. May interact with the cytoskeleton or with regulatory proteins. The protein is Potassium channel SKOR (SKOR) of Arabidopsis thaliana (Mouse-ear cress).